Here is a 467-residue protein sequence, read N- to C-terminus: Putative odorant receptor 85e (467 aa).

At 1–60 (MASLQFHGNVDADIRYDISLDPARESNLFRLLMGLQLANGTKPSPRLPKWWPKRLEMIGK) the chain is on the cytoplasmic side. Residues 61-81 (VLPKAYCSMVIFTSLHLGVLF) traverse the membrane as a helical segment. Over 82 to 98 (TKTTLDVLPTGELQAIT) the chain is Extracellular. A helical transmembrane segment spans residues 99-119 (DALTMTIIYFFTGYGTIYWCL). Residues 120–159 (RSRRLLAYMEHMNREYRHHSLAGVTFVSSHAAFRMSRNFT) lie on the Cytoplasmic side of the membrane. A helical membrane pass occupies residues 160–180 (VVWIMSCLLGVISWGVSPLML). At 181–212 (GIRMLPLQCWYPFDALGPGTYTAVYATQLFGQ) the chain is on the extracellular side. Residues 213–233 (IMVGMTFGFGGSLFVTLSLLL) traverse the membrane as a helical segment. The Cytoplasmic segment spans residues 234–286 (LGQFDVLYCSLKNLDAHTKLLGGESVNGLSSLQEELLLGDSKRELNQYVLLQE). Residues 287 to 307 (HPTDLLRLSAGRKCPDQGNAF) traverse the membrane as a helical segment. Topologically, residues 308–334 (HNALVECIRLHRFILHCSQELENLFSP) are extracellular. Residues 335–355 (YCLVKSLQITFQLCLLVFVGV) form a helical membrane-spanning segment. Residues 356–367 (SGTREVLRIVNQ) are Cytoplasmic-facing. A helical transmembrane segment spans residues 368–388 (LQYLGLTIFELLMFTYCGELL). The Extracellular segment spans residues 389–467 (SRHSIRSGDA…LAAKKTESEL (79 aa)).

This sequence belongs to the insect chemoreceptor superfamily. Heteromeric odorant receptor channel (TC 1.A.69) family. Or2a subfamily. As to quaternary structure, interacts with Orco. Complexes exist early in the endomembrane system in olfactory sensory neurons (OSNs), coupling these complexes to the conserved ciliary trafficking pathway. In terms of tissue distribution, expressed in 15% of the 120 sensory neurons within the maxillary palp.

It is found in the cell membrane. Odorant receptor which mediates acceptance or avoidance behavior, depending on its substrates. The odorant receptor repertoire encodes a large collection of odor stimuli that vary widely in identity, intensity, and duration. May form a complex with Orco to form odorant-sensing units, providing sensitive and prolonged odorant signaling and calcium permeability. The chain is Putative odorant receptor 85e (Or85e) from Drosophila melanogaster (Fruit fly).